The chain runs to 125 residues: Ribosome-binding factor A (125 aa).

The protein belongs to the RbfA family. In terms of assembly, monomer. Binds 30S ribosomal subunits, but not 50S ribosomal subunits or 70S ribosomes.

It is found in the cytoplasm. Functionally, one of several proteins that assist in the late maturation steps of the functional core of the 30S ribosomal subunit. Associates with free 30S ribosomal subunits (but not with 30S subunits that are part of 70S ribosomes or polysomes). Required for efficient processing of 16S rRNA. May interact with the 5'-terminal helix region of 16S rRNA. This Akkermansia muciniphila (strain ATCC BAA-835 / DSM 22959 / JCM 33894 / BCRC 81048 / CCUG 64013 / CIP 107961 / Muc) protein is Ribosome-binding factor A.